A 447-amino-acid chain; its full sequence is Tubulin beta chain (447 aa).

Positions 11, 69, 138, 142, 143, 144, 204, and 226 each coordinate GTP. Glutamate 69 is a Mg(2+) binding site. The tract at residues 427–447 (EAHMDDEEAEEAYEDEAPPEE) is disordered. Residues 430 to 447 (MDDEEAEEAYEDEAPPEE) are compositionally biased toward acidic residues.

Belongs to the tubulin family. In terms of assembly, dimer of alpha and beta chains. A typical microtubule is a hollow water-filled tube with an outer diameter of 25 nm and an inner diameter of 15 nM. Alpha-beta heterodimers associate head-to-tail to form protofilaments running lengthwise along the microtubule wall with the beta-tubulin subunit facing the microtubule plus end conferring a structural polarity. Microtubules usually have 13 protofilaments but different protofilament numbers can be found in some organisms and specialized cells. Mg(2+) is required as a cofactor.

The protein resides in the cytoplasm. It is found in the cytoskeleton. Functionally, tubulin is the major constituent of microtubules, a cylinder consisting of laterally associated linear protofilaments composed of alpha- and beta-tubulin heterodimers. Microtubules grow by the addition of GTP-tubulin dimers to the microtubule end, where a stabilizing cap forms. Below the cap, tubulin dimers are in GDP-bound state, owing to GTPase activity of alpha-tubulin. The sequence is that of Tubulin beta chain (TBB1) from Uromyces fabae (Rust fungus).